A 694-amino-acid polypeptide reads, in one-letter code: DNA-directed RNA polymerase subunit beta' (694 aa).

Residues Cys69, Cys71, Cys87, and Cys90 each contribute to the Zn(2+) site. 3 residues coordinate Mg(2+): Asp489, Asp491, and Asp493.

This sequence belongs to the RNA polymerase beta' chain family. RpoC1 subfamily. In terms of assembly, in plastids the minimal PEP RNA polymerase catalytic core is composed of four subunits: alpha, beta, beta', and beta''. When a (nuclear-encoded) sigma factor is associated with the core the holoenzyme is formed, which can initiate transcription. Mg(2+) is required as a cofactor. Zn(2+) serves as cofactor.

The protein localises to the plastid. The protein resides in the chloroplast. It catalyses the reaction RNA(n) + a ribonucleoside 5'-triphosphate = RNA(n+1) + diphosphate. Functionally, DNA-dependent RNA polymerase catalyzes the transcription of DNA into RNA using the four ribonucleoside triphosphates as substrates. The polypeptide is DNA-directed RNA polymerase subunit beta' (Gossypium barbadense (Sea Island cotton)).